Consider the following 152-residue polypeptide: uncharacterized protein (152 aa).

This sequence belongs to the antirestriction protein family.

This is an uncharacterized protein from Escherichia coli (strain K12).